Consider the following 504-residue polypeptide: Cytochrome P450 6a9 (504 aa).

Heme is bound at residue Cys449.

It belongs to the cytochrome P450 family. Heme is required as a cofactor.

It localises to the endoplasmic reticulum membrane. Its subcellular location is the microsome membrane. Its function is as follows. Involved in the metabolism of insect hormones and in the breakdown of synthetic insecticides. The sequence is that of Cytochrome P450 6a9 (Cyp6a9) from Drosophila melanogaster (Fruit fly).